The chain runs to 336 residues: 3-isopropylmalate dehydrogenase (336 aa).

Positions 87, 97, 121, and 211 each coordinate substrate. Residues aspartate 211, aspartate 235, and aspartate 239 each coordinate Mg(2+). Glycine 271 to aspartate 283 provides a ligand contact to NAD(+).

It belongs to the isocitrate and isopropylmalate dehydrogenases family. LeuB type 2 subfamily. In terms of assembly, homodimer. It depends on Mg(2+) as a cofactor. Requires Mn(2+) as cofactor.

Its subcellular location is the cytoplasm. The enzyme catalyses (2R,3S)-3-isopropylmalate + NAD(+) = 4-methyl-2-oxopentanoate + CO2 + NADH. It functions in the pathway amino-acid biosynthesis; L-leucine biosynthesis; L-leucine from 3-methyl-2-oxobutanoate: step 3/4. Its function is as follows. Catalyzes the oxidation of 3-carboxy-2-hydroxy-4-methylpentanoate (3-isopropylmalate) to 3-carboxy-4-methyl-2-oxopentanoate. The product decarboxylates to 4-methyl-2 oxopentanoate. The sequence is that of 3-isopropylmalate dehydrogenase from Rhodococcus jostii (strain RHA1).